The following is a 29-amino-acid chain: EDFDSQCVPTADPGPCKAYIPMWWYNVLS.

A BPTI/Kunitz inhibitor domain is found at 6–26 (QCVPTADPGPCKAYIPMWWYN).

Serine protease inhibitor. Inhibits trypsin, elastase, plasmin and kallikrein. In Rhipicephalus sanguineus (Brown dog tick), this protein is Kunitz-type serine protease inhibitor RsTIQ7.